A 274-amino-acid chain; its full sequence is GPN-loop GTPase 3 (274 aa).

13–18 lines the GTP pocket; it reads GVGKST. The Gly-Pro-Asn (GPN)-loop; involved in dimer interface motif lies at 70-72; that stretch reads GPN. 173–176 provides a ligand contact to GTP; sequence SKID. A disordered region spans residues 255 to 274; the sequence is SESQEPKEPVEEIEEEVDFE. A compositionally biased stretch (acidic residues) spans 265-274; the sequence is EEIEEEVDFE.

The protein belongs to the GPN-loop GTPase family. As to quaternary structure, heterodimers with GPN1 or GPN2. Binds to RNA polymerase II (RNAPII).

Functionally, small GTPase required for proper nuclear import of RNA polymerase II and III (RNAPII and RNAPIII). May act at an RNAP assembly step prior to nuclear import. The chain is GPN-loop GTPase 3 from Debaryomyces hansenii (strain ATCC 36239 / CBS 767 / BCRC 21394 / JCM 1990 / NBRC 0083 / IGC 2968) (Yeast).